Reading from the N-terminus, the 119-residue chain is Protein Wnt-4 (119 aa).

The O-palmitoleoyl serine; by PORCN moiety is linked to residue serine 1. 2 disulfides stabilise this stretch: cysteine 69–cysteine 100 and cysteine 85–cysteine 95. Asparagine 86 is a glycosylation site (N-linked (GlcNAc...) asparagine).

This sequence belongs to the Wnt family. In terms of processing, palmitoleoylation is required for efficient binding to frizzled receptors. Depalmitoleoylation leads to Wnt signaling pathway inhibition.

The protein resides in the secreted. It is found in the extracellular space. The protein localises to the extracellular matrix. Functionally, ligand for members of the frizzled family of seven transmembrane receptors. Plays an important role in embryonic development. This chain is Protein Wnt-4 (WNT-4), found in Plethodon jordani (Red-cheeked salamander).